The primary structure comprises 467 residues: H(+)/Cl(-) exchange transporter ClcA (467 aa).

The Cytoplasmic portion of the chain corresponds to 1–30 (MTKRERIVKSVLAHVPKDAINQFVSRGSTP). Residues 31-67 (FSVLIMAAIVGTLAGFVGTYFELAVHFVSETRTEWLR) form a helical membrane-spanning segment. The Periplasmic segment spans residues 68–74 (SEIGSVL). The chain crosses the membrane as a helical span at residues 75-98 (PLWLAAVLISALLAFIGYFLVHRF). A Selectivity filter part_1 motif is present at residues 104–108 (GSGIP). Residue Ser105 coordinates chloride. The helical intramembrane region spans 107–114 (IPEIEGAM). At 115–121 (DNIRPVR) the chain is on the cytoplasmic side. 2 consecutive transmembrane segments (helical) span residues 122–139 (WWRV…ALGS) and 146–164 (EGPT…TDIF). The short motif at 144–148 (GREGP) is the Selectivity filter part_2 element. Residues 165–174 (RVKDDDTRHS) are Cytoplasmic-facing. 2 intramembrane regions (helical) span residues 175-187 (LLAS…LAAA) and 191-199 (PLAGIMFVV). Topologically, residues 200 to 212 (EEMRPQFRYSLIS) are cytoplasmic. The chain crosses the membrane as a helical span at residues 213-230 (IRAVIISAIMANIVFRAI). The Periplasmic segment spans residues 231–250 (NGQDAVITMPQYQSPALQTL). The helical transmembrane segment at 251 to 279 (WLFLLLGALFGVFGVIFNKLITVAQDSFV) threads the bilayer. Residues 280–285 (AIHKND) are Cytoplasmic-facing. A helical transmembrane segment spans residues 286–307 (RKRYLITGSILGGVFGLLLLYV). The Periplasmic portion of the chain corresponds to 308–327 (PQLTGGGIALIPDVTTGNYS). Helical transmembrane passes span 328–347 (ISIL…LCFG) and 353–374 (GIFA…ASAD). The short motif at 353 to 357 (GIFAP) is the Selectivity filter part_3 element. Ile354 and Phe355 together coordinate chloride. Residues 375 to 384 (VLLPTLDIEP) lie on the Periplasmic side of the membrane. The segment at residues 385 to 399 (GVFAIAGMGALFAAT) is an intramembrane region (helical). Residues 400–402 (VRA) constitute an intramembrane region (note=Loop between two helices). The segment at residues 403–414 (PITGILLVIEMT) is an intramembrane region (helical). An intramembrane region (note=Loop between two helices) is located at residues 415-419 (NNYYL). The helical transmembrane segment at 420–436 (ILPLIITCLGAVIVAQL) threads the bilayer. Over 437-467 (LGGQPIYSQLLHRTLKNDKLRQQDLPENQAS) the chain is Cytoplasmic. Residue Tyr443 participates in chloride binding.

The protein belongs to the chloride channel (TC 2.A.49) family. ClcA subfamily. In terms of assembly, homodimer.

The protein resides in the cell inner membrane. It catalyses the reaction 2 chloride(in) + H(+)(out) = 2 chloride(out) + H(+)(in). Functionally, proton-coupled chloride transporter. Functions as antiport system and exchanges two chloride ions for 1 proton. Probably acts as an electrical shunt for an outwardly-directed proton pump that is linked to amino acid decarboxylation, as part of the extreme acid resistance (XAR) response. The chain is H(+)/Cl(-) exchange transporter ClcA from Vibrio parahaemolyticus serotype O3:K6 (strain RIMD 2210633).